We begin with the raw amino-acid sequence, 459 residues long: GTPase Der (459 aa).

EngA-type G domains are found at residues 3 to 167 (FTFA…PEPE) and 188 to 363 (IRVA…AVWN). GTP contacts are provided by residues 9 to 16 (GRPNVGKS), 56 to 60 (DTAGL), 119 to 122 (NKSE), 194 to 201 (GRPNAGKS), 241 to 245 (DTAGL), and 306 to 309 (NKWD). The KH-like domain maps to 364–448 (TRVSTAALNR…PVRITLREKA (85 aa)).

This sequence belongs to the TRAFAC class TrmE-Era-EngA-EngB-Septin-like GTPase superfamily. EngA (Der) GTPase family. In terms of assembly, associates with the 50S ribosomal subunit.

In terms of biological role, GTPase that plays an essential role in the late steps of ribosome biogenesis. The sequence is that of GTPase Der from Rhodopseudomonas palustris (strain HaA2).